The primary structure comprises 172 residues: Large ribosomal subunit protein uL10 (172 aa).

This sequence belongs to the universal ribosomal protein uL10 family. Part of the ribosomal stalk of the 50S ribosomal subunit. The N-terminus interacts with L11 and the large rRNA to form the base of the stalk. The C-terminus forms an elongated spine to which L12 dimers bind in a sequential fashion forming a multimeric L10(L12)X complex.

Functionally, forms part of the ribosomal stalk, playing a central role in the interaction of the ribosome with GTP-bound translation factors. The sequence is that of Large ribosomal subunit protein uL10 from Chlamydia trachomatis serovar A (strain ATCC VR-571B / DSM 19440 / HAR-13).